Consider the following 164-residue polypeptide: OV-17 antigen (164 aa).

A signal peptide spans 1–16; sequence MKFVILLTIGLLVVAA. Residues 24 to 43 form a disordered region; sequence QQQQQQQQQRDEREIPPFLE.

The protein belongs to the SXP/RAL-2 family. In terms of tissue distribution, high levels in the hypodermal layer of the adult female.

The sequence is that of OV-17 antigen (OV17) from Onchocerca volvulus.